Consider the following 221-residue polypeptide: Ribonuclease 3 (221 aa).

Positions 4–121 (LEQLEKKLGY…LWAAVYIDSG (118 aa)) constitute an RNase III domain. Residue Glu-40 coordinates Mg(2+). Asp-44 is an active-site residue. Asp-107 and Glu-110 together coordinate Mg(2+). Glu-110 is an active-site residue. A DRBM domain is found at 151–219 (DYKTILQEIT…AEELIKLLEE (69 aa)).

It belongs to the ribonuclease III family. In terms of assembly, homodimer. Mg(2+) serves as cofactor.

The protein localises to the cytoplasm. It carries out the reaction Endonucleolytic cleavage to 5'-phosphomonoester.. Functionally, digests double-stranded RNA. Involved in the processing of primary rRNA transcript to yield the immediate precursors to the large and small rRNAs (23S and 16S). Also processes some mRNAs, and tRNAs when they are encoded in the rRNA operon. Probably processes pre-crRNA and tracrRNA of type II CRISPR loci if present in the organism. The protein is Ribonuclease 3 (rnc) of Aquifex aeolicus (strain VF5).